Here is a 623-residue protein sequence, read N- to C-terminus: ATP-dependent zinc metalloprotease FtsH (623 aa).

Over 1 to 7 (MNQSFWR) the chain is Cytoplasmic. The helical transmembrane segment at 8 to 28 (PLFAILLFMLVFHLTNIFFAQ) threads the bilayer. The Periplasmic segment spans residues 29 to 117 (QGAQVAQISY…EVSALSTETP (89 aa)). A helical membrane pass occupies residues 118 to 138 (LLLNALIYVAPWVILIAIWWV). At 139–623 (GMRSMRSQGP…SLNTAQAPPP (485 aa)) the chain is on the cytoplasmic side. Position 214–221 (214–221 (GPPGTGKT)) interacts with ATP. Histidine 435 is a binding site for Zn(2+). Residue glutamate 436 is part of the active site. Residues histidine 439 and aspartate 511 each coordinate Zn(2+).

This sequence in the central section; belongs to the AAA ATPase family. The protein in the C-terminal section; belongs to the peptidase M41 family. Homohexamer. It depends on Zn(2+) as a cofactor.

It is found in the cell inner membrane. Functionally, acts as a processive, ATP-dependent zinc metallopeptidase for both cytoplasmic and membrane proteins. Plays a role in the quality control of integral membrane proteins. This is ATP-dependent zinc metalloprotease FtsH from Pelobacter propionicus (strain DSM 2379 / NBRC 103807 / OttBd1).